The chain runs to 242 residues: Polycomb group RING finger protein 3 (242 aa).

The segment at 17-56 (CRLCSGYLIDATTVTECLHTFCRSCLVKYLEENNTCPTCR) adopts an RING-type zinc-finger fold. Residues 115–149 (AKQHLDSHRNGETKADDSSNKEAAEEKPEEDNDYH) form a disordered region. Over residues 117-140 (QHLDSHRNGETKADDSSNKEAAEE) the composition is skewed to basic and acidic residues. The interaction with BCORL1 stretch occupies residues 132–242 (SSNKEAAEEK…LHYRPKMDLL (111 aa)).

In terms of assembly, component of a PRC1-like complex that contains PCGF3, RNF2 and RYBP. Interacts with CBX6, CBX7 and CBX8. Interacts with BCORL1.

Its subcellular location is the nucleus. The protein localises to the nucleoplasm. Functionally, component of a Polycomb group (PcG) multiprotein PRC1-like complex, a complex class required to maintain the transcriptionally repressive state of many genes, including Hox genes, throughout development. PcG PRC1 complex acts via chromatin remodeling and modification of histones; it mediates monoubiquitination of histone H2A 'Lys-119', rendering chromatin heritably changed in its expressibility. Within the PRC1-like complex, regulates RNF2 ubiquitin ligase activity. Plays a redundant role with PCGF5 as part of a PRC1-like complex that mediates monoubiquitination of histone H2A 'Lys-119' on the X chromosome and is required for normal silencing of one copy of the X chromosome in XX females. The polypeptide is Polycomb group RING finger protein 3 (PCGF3) (Homo sapiens (Human)).